A 99-amino-acid chain; its full sequence is uncharacterized protein (99 aa).

A helical transmembrane segment spans residues Leu6–Ile26. The LysM domain maps to Lys48 to Phe95.

It localises to the secreted. The protein localises to the cell wall. The protein resides in the membrane. This is an uncharacterized protein from Bacillus subtilis (strain 168).